A 152-amino-acid polypeptide reads, in one-letter code: Protein-export protein SecB (152 aa).

The protein belongs to the SecB family. Homotetramer, a dimer of dimers. One homotetramer interacts with 1 SecA dimer.

Its subcellular location is the cytoplasm. Functionally, one of the proteins required for the normal export of preproteins out of the cell cytoplasm. It is a molecular chaperone that binds to a subset of precursor proteins, maintaining them in a translocation-competent state. It also specifically binds to its receptor SecA. This chain is Protein-export protein SecB, found in Verminephrobacter eiseniae (strain EF01-2).